A 303-amino-acid polypeptide reads, in one-letter code: Tyrosine-protein phosphatase 3 (303 aa).

The 269-residue stretch at 24 to 292 folds into the Tyrosine-protein phosphatase domain; it reads YMIIEGLNEE…VFLYTVSQEL (269 aa). The Phosphocysteine intermediate role is filled by cysteine 227.

It belongs to the protein-tyrosine phosphatase family. Non-receptor class subfamily.

Its subcellular location is the cytoplasm. It carries out the reaction O-phospho-L-tyrosyl-[protein] + H2O = L-tyrosyl-[protein] + phosphate. Contributes to dephosphorylation of tyrosine 15 of cdc2. This is Tyrosine-protein phosphatase 3 (pyp3) from Schizosaccharomyces pombe (strain 972 / ATCC 24843) (Fission yeast).